The primary structure comprises 86 residues: Small ribosomal subunit protein bS20 (86 aa).

The segment at 1–25 (MANIKSQMKRIRTNEAARKRNQSVK) is disordered.

This sequence belongs to the bacterial ribosomal protein bS20 family.

In terms of biological role, binds directly to 16S ribosomal RNA. This is Small ribosomal subunit protein bS20 from Nocardia farcinica (strain IFM 10152).